A 432-amino-acid chain; its full sequence is FMRFamide peptide receptor frpr-18 (432 aa).

Residues 1–8 are Extracellular-facing; that stretch reads MESQQLMA. Residues 9–29 traverse the membrane as a helical segment; it reads CAILVIVLVGIFGNSLSFILF. Residues 30 to 42 are Cytoplasmic-facing; that stretch reads SRPHMRSSSVNVL. Residues 43–63 form a helical membrane-spanning segment; that stretch reads LCALSFFDFSLLTLSIPIFVI. Over 64–84 the chain is Extracellular; sequence PNLDLWANDLSLSTYMAYILK. The chain crosses the membrane as a helical span at residues 85–105; the sequence is LIYPINLMMQTCSVYIMVMIT. Residues 106-128 lie on the Cytoplasmic side of the membrane; that stretch reads LERWVAVCRPLQVRVWCTPRKSR. A helical membrane pass occupies residues 129–149; that stretch reads NAILVIIVSAFLYNFVRFFEY. At 150–176 the chain is on the extracellular side; sequence RFVVTESGALYEKWLRDPGKHRWYYVG. Residues 177–197 traverse the membrane as a helical segment; that stretch reads YYTILYIVTHFLVPFSVMAFA. At 198–225 the chain is on the cytoplasmic side; sequence NGHVIVAMCKLSKTRQMLTRQQQREQST. The chain crosses the membrane as a helical span at residues 226 to 246; that stretch reads TVMLLIVTFVFAICNTLPFLL. Residues 247-271 lie on the Extracellular side of the membrane; the sequence is NVSESIFPTLFQDESTRGLAYWLND. A helical transmembrane segment spans residues 272–292; the sequence is LSNLLVVLNSGTTFIIYFTFS. At 293 to 432 the chain is on the cytoplasmic side; the sequence is EKYRQTLVFI…GEPDSPCQPC (140 aa). Disordered regions lie at residues 328 to 349 and 388 to 411; these read ISSE…SSRS and KLPS…GMPE.

Belongs to the G-protein coupled receptor 1 family. Expressed in a subset of neurons in the head, midbody, and tail, including AIY, ASI, BAG, URA, CAN, I6, PVQ, DVA, RIM, and VC, and in the anal sphincter and intestinal muscles. Expression from the ASI neurons is involved in promoting arousal.

The protein resides in the cell membrane. G-protein coupled receptor for flp-2 neuropeptides. May act through the G(q) alpha type of G proteins. Involved in mediating arousal from the sleep-like state called lethargus, which occurs during molting between larval and adult stages, in part by regulating touch sensitivity, and working in concert with neuropeptide pdf-1. The polypeptide is FMRFamide peptide receptor frpr-18 (Caenorhabditis elegans).